The chain runs to 201 residues: Recombination protein RecR (201 aa).

Residues 60-75 (CKTCGNIDTQNPCTVC) form a C4-type zinc finger. In terms of domain architecture, Toprim spans 83-178 (SIIVVVADVA…KVTRLAHGVP (96 aa)).

The protein belongs to the RecR family.

Its function is as follows. May play a role in DNA repair. It seems to be involved in an RecBC-independent recombinational process of DNA repair. It may act with RecF and RecO. This is Recombination protein RecR from Rhodopseudomonas palustris (strain HaA2).